The following is a 270-amino-acid chain: Interleukin-2 receptor subunit alpha (270 aa).

The first 21 residues, 1–21, serve as a signal peptide directing secretion; sequence MEPSLLMWGFFTFTMIPGCMA. The region spanning 22-84 is the Sushi 1 domain; it reads GACVQQPPSL…FWENKCQCMP (63 aa). Topologically, residues 22-245 are extracellular; it reads GACVQQPPSL…QPIIFTTQYQ (224 aa). 3 disulfides stabilise this stretch: cysteine 24–cysteine 67, cysteine 49–cysteine 80, and cysteine 51–cysteine 82. 2 N-linked (GlcNAc...) asparagine glycosylation sites follow: asparagine 33 and asparagine 70. Residues 87-124 form a disordered region; that stretch reads SPRIPVKQVTPRPEEQKERKTTETQGQMQPPNQANLPG. The segment covering 98–108 has biased composition (basic and acidic residues); that stretch reads RPEEQKERKTT. The segment covering 112 to 121 has biased composition (polar residues); the sequence is GQMQPPNQAN. A Sushi 2 domain is found at 124–191; the sequence is GHCKEPPPWE…WTQPKLKCKS (68 aa). Disulfide bonds link cysteine 126–cysteine 171 and cysteine 153–cysteine 189. Residues asparagine 164 and asparagine 195 are each glycosylated (N-linked (GlcNAc...) asparagine). The interval 190 to 225 is disordered; sequence KSEKENGSFPEPQMSTAAPPTTKTSLPTRTKGTTDS. The segment covering 202–225 has biased composition (polar residues); sequence QMSTAAPPTTKTSLPTRTKGTTDS. N-linked (GlcNAc...) asparagine glycosylation occurs at asparagine 227. The helical transmembrane segment at 246-264 threads the bilayer; the sequence is LAVAGCVLLLLSILLLSGL. The Cytoplasmic segment spans residues 265–270; the sequence is TWQRRR.

As to quaternary structure, non-covalent dimer of an alpha and a beta subunit. IL2R exists in 3 different forms: a high affinity dimer, an intermediate affinity monomer (beta subunit), and a low affinity monomer (alpha subunit). The high and intermediate affinity forms also associate with a gamma subunit.

The protein resides in the membrane. Receptor for interleukin-2. The receptor is involved in the regulation of immune tolerance by controlling regulatory T cells (TREGs) activity. TREGs suppress the activation and expansion of autoreactive T-cells. The protein is Interleukin-2 receptor subunit alpha (IL2RA) of Sus scrofa (Pig).